The sequence spans 388 residues: GTPase Obg (388 aa).

Positions 1-159 (MKFVDEAVIR…RSLKLELLLL (159 aa)) constitute an Obg domain. Residues 160–333 (ADVGLLGMPN…LALKLLDYIA (174 aa)) enclose the OBG-type G domain. GTP contacts are provided by residues 166-173 (GMPNAGKS), 191-195 (FTTLV), 213-216 (DIPG), 283-286 (NKTD), and 314-316 (SAY). Mg(2+) contacts are provided by S173 and T193.

The protein belongs to the TRAFAC class OBG-HflX-like GTPase superfamily. OBG GTPase family. Monomer. It depends on Mg(2+) as a cofactor.

The protein localises to the cytoplasm. Functionally, an essential GTPase which binds GTP, GDP and possibly (p)ppGpp with moderate affinity, with high nucleotide exchange rates and a fairly low GTP hydrolysis rate. Plays a role in control of the cell cycle, stress response, ribosome biogenesis and in those bacteria that undergo differentiation, in morphogenesis control. This chain is GTPase Obg, found in Shewanella putrefaciens (strain CN-32 / ATCC BAA-453).